We begin with the raw amino-acid sequence, 394 residues long: Elongation factor Tu (394 aa).

The region spanning 10–204 (KPHVNVGTIG…FLDSYIPEPE (195 aa)) is the tr-type G domain. The interval 19–26 (GHVDHGKT) is G1. Residue 19–26 (GHVDHGKT) coordinates GTP. Residue Thr26 coordinates Mg(2+). The G2 stretch occupies residues 60–64 (GITIN). The G3 stretch occupies residues 81–84 (DCPG). Residues 81–85 (DCPGH) and 136–139 (NKCD) contribute to the GTP site. Positions 136–139 (NKCD) are G4. Residues 174 to 176 (SAL) are G5.

It belongs to the TRAFAC class translation factor GTPase superfamily. Classic translation factor GTPase family. EF-Tu/EF-1A subfamily. Monomer.

The protein resides in the cytoplasm. The catalysed reaction is GTP + H2O = GDP + phosphate + H(+). Its function is as follows. GTP hydrolase that promotes the GTP-dependent binding of aminoacyl-tRNA to the A-site of ribosomes during protein biosynthesis. This chain is Elongation factor Tu, found in Salmonella arizonae (strain ATCC BAA-731 / CDC346-86 / RSK2980).